A 450-amino-acid polypeptide reads, in one-letter code: Tubulin alpha-1 chain (450 aa).

7 residues coordinate GTP: Q11, E71, G144, T145, T179, N206, and N228. Residue E71 participates in Mg(2+) binding. E254 is an active-site residue. Position 349 is a phosphothreonine (T349). A disordered region spans residues 431–450 (DYEEVGGEGAEDDDEEGDEY).

This sequence belongs to the tubulin family. In terms of assembly, dimer of alpha and beta chains. A typical microtubule is a hollow water-filled tube with an outer diameter of 25 nm and an inner diameter of 15 nM. Alpha-beta heterodimers associate head-to-tail to form protofilaments running lengthwise along the microtubule wall with the beta-tubulin subunit facing the microtubule plus end conferring a structural polarity. Microtubules usually have 13 protofilaments but different protofilament numbers can be found in some organisms and specialized cells. It depends on Mg(2+) as a cofactor. In terms of processing, undergoes a tyrosination/detyrosination cycle, the cyclic removal and re-addition of a C-terminal tyrosine residue by the enzymes tubulin tyrosine carboxypeptidase (TTCP) and tubulin tyrosine ligase (TTL), respectively.

The protein resides in the cytoplasm. Its subcellular location is the cytoskeleton. The enzyme catalyses GTP + H2O = GDP + phosphate + H(+). Its function is as follows. Tubulin is the major constituent of microtubules, a cylinder consisting of laterally associated linear protofilaments composed of alpha- and beta-tubulin heterodimers. Microtubules grow by the addition of GTP-tubulin dimers to the microtubule end, where a stabilizing cap forms. Below the cap, tubulin dimers are in GDP-bound state, owing to GTPase activity of alpha-tubulin. The sequence is that of Tubulin alpha-1 chain (TUBA1) from Arabidopsis thaliana (Mouse-ear cress).